The following is a 417-amino-acid chain: NADH-quinone oxidoreductase subunit D (417 aa).

The protein belongs to the complex I 49 kDa subunit family. As to quaternary structure, NDH-1 is composed of 14 different subunits. Subunits NuoB, C, D, E, F, and G constitute the peripheral sector of the complex.

Its subcellular location is the cell inner membrane. It catalyses the reaction a quinone + NADH + 5 H(+)(in) = a quinol + NAD(+) + 4 H(+)(out). NDH-1 shuttles electrons from NADH, via FMN and iron-sulfur (Fe-S) centers, to quinones in the respiratory chain. The immediate electron acceptor for the enzyme in this species is believed to be ubiquinone. Couples the redox reaction to proton translocation (for every two electrons transferred, four hydrogen ions are translocated across the cytoplasmic membrane), and thus conserves the redox energy in a proton gradient. In Polaromonas naphthalenivorans (strain CJ2), this protein is NADH-quinone oxidoreductase subunit D.